The following is a 354-amino-acid chain: UDP-3-O-acylglucosamine N-acyltransferase (354 aa).

The active-site Proton acceptor is H247.

It belongs to the transferase hexapeptide repeat family. LpxD subfamily. As to quaternary structure, homotrimer.

The enzyme catalyses a UDP-3-O-[(3R)-3-hydroxyacyl]-alpha-D-glucosamine + a (3R)-hydroxyacyl-[ACP] = a UDP-2-N,3-O-bis[(3R)-3-hydroxyacyl]-alpha-D-glucosamine + holo-[ACP] + H(+). Its pathway is bacterial outer membrane biogenesis; LPS lipid A biosynthesis. In terms of biological role, catalyzes the N-acylation of UDP-3-O-acylglucosamine using 3-hydroxyacyl-ACP as the acyl donor. Is involved in the biosynthesis of lipid A, a phosphorylated glycolipid that anchors the lipopolysaccharide to the outer membrane of the cell. In Chlamydia trachomatis serovar L2b (strain UCH-1/proctitis), this protein is UDP-3-O-acylglucosamine N-acyltransferase.